The chain runs to 394 residues: Seipin (394 aa).

Over 1–27 the chain is Cytoplasmic; it reads MVNDPPVPALLWAQEMGHVMAGRARKL. Residues 28–48 traverse the membrane as a helical segment; sequence LLQFGVFFCTILLLLWVSVFL. Residues 49-242 are Lumenal-facing; that stretch reads YGSFYYSYMP…TCAFVGVASN (194 aa). Residues asparagine 88 and asparagine 242 are each glycosylated (N-linked (GlcNAc...) asparagine). The chain crosses the membrane as a helical span at residues 243-263; the sequence is FTFLSVIVLFSYMQWVWGGIW. The Cytoplasmic portion of the chain corresponds to 264-394; sequence PRQRLSLQVN…VRQRPICSSS (131 aa). Residues 281–394 are disordered; that stretch reads RKDIQRKVSA…VRQRPICSSS (114 aa). Serine 289 is subject to Phosphoserine. Residues 292–303 are compositionally biased toward low complexity; the sequence is QPGPQGQEESPQ. Residues serine 346 and serine 351 each carry the phosphoserine modification.

This sequence belongs to the seipin family. As to quaternary structure, undecamer (an oligomer having eleven subunits). Oligomerization is important for its function in lipid droplet formation. Interacts with LDAF1 to form an oligomeric complex. Interacts with RAB18. Interacts with ZFYVE1 in a RAB18-dependent manner.

The protein localises to the endoplasmic reticulum membrane. It is found in the lipid droplet. Plays a crucial role in the formation of lipid droplets (LDs) which are storage organelles at the center of lipid and energy homeostasis. In association with LDAF1, defines the sites of LD formation in the ER. Also required for growth and maturation of small nascent LDs into larger mature LDs. Mediates the formation and/or stabilization of endoplasmic reticulum-lipid droplets (ER-LD) contacts, facilitating protein and lipid delivery from the ER into growing LDs. Regulates the maturation of ZFYVE1-positive nascent LDs and the function of the RAB18-ZFYVE1 complex in mediating the formation of ER-LD contacts. Binds anionic phospholipids including phosphatidic acid. Plays an important role in the differentiation and development of adipocytes. The sequence is that of Seipin from Bos taurus (Bovine).